A 448-amino-acid polypeptide reads, in one-letter code: DNA repair protein RadA (448 aa).

The C4-type zinc-finger motif lies at 10-27 (CSNCGNTSPKWSGQCFDC). 91–98 (GDPGIGKS) serves as a coordination point for ATP. Residues 250 to 254 (KNRFG) carry the RadA KNRFG motif motif. A lon-protease-like region spans residues 349–448 (EVYLSIAGGL…KDLKLLLGSS (100 aa)).

The protein belongs to the RecA family. RadA subfamily.

Functionally, DNA-dependent ATPase involved in processing of recombination intermediates, plays a role in repairing DNA breaks. Stimulates the branch migration of RecA-mediated strand transfer reactions, allowing the 3' invading strand to extend heteroduplex DNA faster. Binds ssDNA in the presence of ADP but not other nucleotides, has ATPase activity that is stimulated by ssDNA and various branched DNA structures, but inhibited by SSB. Does not have RecA's homology-searching function. The polypeptide is DNA repair protein RadA (Rickettsia bellii (strain RML369-C)).